We begin with the raw amino-acid sequence, 155 residues long: SsrA-binding protein (155 aa).

Belongs to the SmpB family.

It localises to the cytoplasm. Its function is as follows. Required for rescue of stalled ribosomes mediated by trans-translation. Binds to transfer-messenger RNA (tmRNA), required for stable association of tmRNA with ribosomes. tmRNA and SmpB together mimic tRNA shape, replacing the anticodon stem-loop with SmpB. tmRNA is encoded by the ssrA gene; the 2 termini fold to resemble tRNA(Ala) and it encodes a 'tag peptide', a short internal open reading frame. During trans-translation Ala-aminoacylated tmRNA acts like a tRNA, entering the A-site of stalled ribosomes, displacing the stalled mRNA. The ribosome then switches to translate the ORF on the tmRNA; the nascent peptide is terminated with the 'tag peptide' encoded by the tmRNA and targeted for degradation. The ribosome is freed to recommence translation, which seems to be the essential function of trans-translation. The protein is SsrA-binding protein of Streptococcus pneumoniae (strain P1031).